The chain runs to 160 residues: Cytochrome b6-f complex subunit 4 (160 aa).

3 helical membrane-spanning segments follow: residues leucine 36–valine 56, leucine 95–glutamate 115, and threonine 131–isoleucine 151.

This sequence belongs to the cytochrome b family. PetD subfamily. In terms of assembly, the 4 large subunits of the cytochrome b6-f complex are cytochrome b6, subunit IV (17 kDa polypeptide, petD), cytochrome f and the Rieske protein, while the 4 small subunits are petG, petL, petM and petN. The complex functions as a dimer.

The protein resides in the plastid. It is found in the chloroplast thylakoid membrane. In terms of biological role, component of the cytochrome b6-f complex, which mediates electron transfer between photosystem II (PSII) and photosystem I (PSI), cyclic electron flow around PSI, and state transitions. This is Cytochrome b6-f complex subunit 4 from Chara vulgaris (Common stonewort).